Here is a 449-residue protein sequence, read N- to C-terminus: Probable mitochondrial chaperone bcs1 (449 aa).

Over 1–20 (MDNIGAADAATSSGISGLLS) the chain is Mitochondrial intermembrane. The helical transmembrane segment at 21–41 (GNSFLGAGIGLMGFGAGLAIL) threads the bilayer. Residues 42 to 449 (RRGLISGASL…FNVHRKSLSV (408 aa)) are Mitochondrial matrix-facing. 249-256 (GPPGSGKT) is an ATP binding site.

Belongs to the AAA ATPase family. BCS1 subfamily.

The protein localises to the mitochondrion inner membrane. The enzyme catalyses ATP + H2O = ADP + phosphate + H(+). Its function is as follows. Chaperone necessary for the incorporation of Rieske iron-sulfur protein rip1 into the mitochondrial respiratory chain complex III. The chain is Probable mitochondrial chaperone bcs1 from Schizosaccharomyces pombe (strain 972 / ATCC 24843) (Fission yeast).